The primary structure comprises 159 residues: Ribosomal RNA large subunit methyltransferase H (159 aa).

Residues leucine 76, glycine 108, and 127-132 (FGLLTL) contribute to the S-adenosyl-L-methionine site.

The protein belongs to the RNA methyltransferase RlmH family. As to quaternary structure, homodimer.

The protein localises to the cytoplasm. It catalyses the reaction pseudouridine(1915) in 23S rRNA + S-adenosyl-L-methionine = N(3)-methylpseudouridine(1915) in 23S rRNA + S-adenosyl-L-homocysteine + H(+). In terms of biological role, specifically methylates the pseudouridine at position 1915 (m3Psi1915) in 23S rRNA. This is Ribosomal RNA large subunit methyltransferase H from Leuconostoc citreum (strain KM20).